A 769-amino-acid polypeptide reads, in one-letter code: ATP-dependent RNA helicase DBP7 (769 aa).

Disordered regions lie at residues 38-107 (AVKR…DRKS) and 127-150 (VAST…NAPL). Over residues 55 to 68 (NSNNPQNPNKINVP) the composition is skewed to low complexity. The short motif at 155–184 (DTFTSLGLSPSLATHLLTKLNLKTPTAIQK) is the Q motif element. Residues 188–389 (TQLLKEECDA…EISLKEAIHI (202 aa)) form the Helicase ATP-binding domain. 201-208 (AQTGSGKT) contacts ATP. The DEAD box motif lies at 325–328 (DEGD). Disordered regions lie at residues 391–411 (ADPA…EFSA), 471–490 (SEEL…NVHG), and 705–769 (VPGL…FNIA). The Helicase C-terminal domain maps to 430–622 (TLTALLKRTF…EVNEILKRGF (193 aa)). Acidic residues predominate over residues 472 to 481 (EELPDADDEN). 2 stretches are compositionally biased toward basic and acidic residues: residues 711–739 (GNED…REDS) and 746–760 (AEAR…KEHM).

It belongs to the DEAD box helicase family. DDX31/DBP7 subfamily.

It localises to the nucleus. Its subcellular location is the nucleolus. It catalyses the reaction ATP + H2O = ADP + phosphate + H(+). In terms of biological role, ATP-binding RNA helicase involved in the biogenesis of 60S ribosomal subunits and is required for the normal formation of 25S and 5.8S rRNAs. This chain is ATP-dependent RNA helicase DBP7 (DBP7), found in Coccidioides immitis (strain RS) (Valley fever fungus).